The chain runs to 236 residues: Ribose-5-phosphate isomerase A (236 aa).

Substrate-binding positions include 33-36 (TGST), 90-93 (DGAD), and 103-106 (KGGG). The Proton acceptor role is filled by Glu112. Position 130 (Lys130) interacts with substrate.

The protein belongs to the ribose 5-phosphate isomerase family. In terms of assembly, homodimer.

The catalysed reaction is aldehydo-D-ribose 5-phosphate = D-ribulose 5-phosphate. Its pathway is carbohydrate degradation; pentose phosphate pathway; D-ribose 5-phosphate from D-ribulose 5-phosphate (non-oxidative stage): step 1/1. Functionally, catalyzes the reversible conversion of ribose-5-phosphate to ribulose 5-phosphate. This Nostoc sp. (strain PCC 7120 / SAG 25.82 / UTEX 2576) protein is Ribose-5-phosphate isomerase A.